Consider the following 152-residue polypeptide: uncharacterized protein (152 aa).

Helical transmembrane passes span 13 to 33, 38 to 58, and 69 to 89; these read LLWF…LLFF, LIVE…SLFM, and WVIF…FFVI.

The protein resides in the cell membrane. This is an uncharacterized protein from Mycoplasma pneumoniae (strain ATCC 29342 / M129 / Subtype 1) (Mycoplasmoides pneumoniae).